Reading from the N-terminus, the 227-residue chain is Ras-related protein Rab-3C (227 aa).

GTP contacts are provided by S39, G42, K43, T44, S45, T56, S57, S61, and T62. A Mg(2+)-binding site is contributed by T44. The Switch 1 motif lies at 53–66; sequence DSFTSAFVSTVGID. Residues T62 and D85 each contribute to the Mg(2+) site. Position 86 is a phosphothreonine; by LRRK2 (T86). Residues 86-104 carry the Switch 2 motif; that stretch reads TAGQERYRTITTAYYRGAM. GTP contacts are provided by G88, N143, K144, D146, A174, and K175. Residues S196 and S198 each carry the phosphoserine modification. The segment at 202–227 is disordered; the sequence is DPAITAAKQSTRLKETPPPPQPNCGC. Residue T206 is modified to Phosphothreonine. The segment covering 217–227 has biased composition (pro residues); the sequence is TPPPPQPNCGC. S-geranylgeranyl cysteine attachment occurs at residues C225 and C227. C227 carries the cysteine methyl ester modification.

This sequence belongs to the small GTPase superfamily. Rab family. In terms of assembly, interacts with RIMS1, RIMS2, RPH3A and RPH3AL. Interacts with GDI2, CHM and CHML; phosphorylation at Thr-86 disrupts these interactions. Interacts with MADD (via uDENN domain); the GTP-bound form is preferred for interaction. Mg(2+) serves as cofactor. In terms of processing, phosphorylation of Thr-86 in the switch II region by LRRK2 prevents the association of RAB regulatory proteins, including CHM, CHML and RAB GDP dissociation inhibitor GDI2.

The protein resides in the cell membrane. The enzyme catalyses GTP + H2O = GDP + phosphate + H(+). Its activity is regulated as follows. Regulated by guanine nucleotide exchange factors (GEFs) which promote the exchange of bound GDP for free GTP. Regulated by GTPase activating proteins (GAPs) which increase the GTP hydrolysis activity. Inhibited by GDP dissociation inhibitors (GDIs) which prevent Rab-GDP dissociation. The small GTPases Rab are key regulators of intracellular membrane trafficking, from the formation of transport vesicles to their fusion with membranes. Rabs cycle between an inactive GDP-bound form and an active GTP-bound form that is able to recruit to membranes different sets of downstream effectors directly responsible for vesicle formation, movement, tethering and fusion. This is Ras-related protein Rab-3C from Mus musculus (Mouse).